The following is a 279-amino-acid chain: MNRYDNSLSGLKLGQKTEYNAKYDRTLLQPVPRRLNRDDLGISAQQPFNQGADIWTAYEISWLNPKGLPQIAIADAEIDFRSENLVESKSFKLYLNSFNQTKFASPAEVQDTIRRDLQDCVQGEVKVRLNSVAFYTHQPIHELSGEIIDNQDIEISDYGFNAELLTNCTCDVQVEETLVSHLLKSNCLITGQPDWGTLQIRYAGNRIDREKLLRYIVSFRQHNEFHEQCVERIFCDILHYAEPEKLTVYARYTRRGGLDINPFRSNFEPVPGNFRLARQ.

86-88 (VES) contributes to the substrate binding site. Residue 88–89 (SK) coordinates NADPH. Residue Cys-187 is the Thioimide intermediate of the active site. Catalysis depends on Asp-194, which acts as the Proton donor. 226-227 (HE) contacts substrate. 255-256 (RG) provides a ligand contact to NADPH.

This sequence belongs to the GTP cyclohydrolase I family. QueF type 2 subfamily. Homodimer.

Its subcellular location is the cytoplasm. The enzyme catalyses 7-aminomethyl-7-carbaguanine + 2 NADP(+) = 7-cyano-7-deazaguanine + 2 NADPH + 3 H(+). Its pathway is tRNA modification; tRNA-queuosine biosynthesis. Its function is as follows. Catalyzes the NADPH-dependent reduction of 7-cyano-7-deazaguanine (preQ0) to 7-aminomethyl-7-deazaguanine (preQ1). The protein is NADPH-dependent 7-cyano-7-deazaguanine reductase of Actinobacillus succinogenes (strain ATCC 55618 / DSM 22257 / CCUG 43843 / 130Z).